A 232-amino-acid polypeptide reads, in one-letter code: Ubiquitin-conjugating enzyme E2-24 kDa (232 aa).

Positions 1-37 are enriched in low complexity; that stretch reads MSSTPAAGSAAEVATSSATSNAPSAPSTTASNVSNTS. The segment at 1–87 is disordered; sequence MSSTPAAGSA…PRISRALGTS (87 aa). The span at 58 to 67 shows a compositional bias: gly residues; that stretch reads GASGSNAGGG. In terms of domain architecture, UBC core spans 86–232; that stretch reads TSAKRIQKEL…ARLWTKRYAT (147 aa). The active-site Glycyl thioester intermediate is C170.

The protein belongs to the ubiquitin-conjugating enzyme family.

The enzyme catalyses S-ubiquitinyl-[E1 ubiquitin-activating enzyme]-L-cysteine + [E2 ubiquitin-conjugating enzyme]-L-cysteine = [E1 ubiquitin-activating enzyme]-L-cysteine + S-ubiquitinyl-[E2 ubiquitin-conjugating enzyme]-L-cysteine.. The protein operates within protein modification; protein ubiquitination. In terms of biological role, catalyzes the covalent attachment of ubiquitin to other proteins. The chain is Ubiquitin-conjugating enzyme E2-24 kDa from Drosophila melanogaster (Fruit fly).